A 57-amino-acid polypeptide reads, in one-letter code: MAGNEKSRAKMEQAKGKAKEAAGRAVGNERMTAEGRAAQSKGDARQAKEKGKDVFRH.

Basic and acidic residues-rich tracts occupy residues 1 to 22 (MAGN…KEAA) and 42 to 57 (GDAR…VFRH). The interval 1-57 (MAGNEKSRAKMEQAKGKAKEAAGRAVGNERMTAEGRAAQSKGDARQAKEKGKDVFRH) is disordered.

It belongs to the UPF0337 (CsbD) family.

In Streptomyces coelicolor (strain ATCC BAA-471 / A3(2) / M145), this protein is UPF0337 protein SCO0678.